The sequence spans 261 residues: Carnitinyl-CoA dehydratase (261 aa).

The active-site Nucleophile is Glu-111. Glu-131 acts as the Proton acceptor in catalysis.

This sequence belongs to the enoyl-CoA hydratase/isomerase family.

It carries out the reaction (R)-carnitinyl-CoA = crotonobetainyl-CoA + H2O. It functions in the pathway amine and polyamine metabolism; carnitine metabolism. Its function is as follows. Catalyzes the reversible dehydration of L-carnitinyl-CoA to crotonobetainyl-CoA. This is Carnitinyl-CoA dehydratase from Citrobacter koseri (strain ATCC BAA-895 / CDC 4225-83 / SGSC4696).